Reading from the N-terminus, the 103-residue chain is Small integral membrane protein 32 (103 aa).

A helical transmembrane segment spans residues 55-75 (YLLLFFLLLLSVALVVLFIGC).

It is found in the membrane. The protein is Small integral membrane protein 32 of Homo sapiens (Human).